The chain runs to 481 residues: 3-isopropylmalate dehydratase large subunit (481 aa).

[4Fe-4S] cluster is bound by residues Cys363, Cys423, and Cys426. The tract at residues 437 to 463 (GQRAASTSNRNFEGRQGRGGRTHLVSP) is disordered.

This sequence belongs to the aconitase/IPM isomerase family. LeuC type 1 subfamily. As to quaternary structure, heterodimer of LeuC and LeuD. Requires [4Fe-4S] cluster as cofactor.

It carries out the reaction (2R,3S)-3-isopropylmalate = (2S)-2-isopropylmalate. The protein operates within amino-acid biosynthesis; L-leucine biosynthesis; L-leucine from 3-methyl-2-oxobutanoate: step 2/4. Its function is as follows. Catalyzes the isomerization between 2-isopropylmalate and 3-isopropylmalate, via the formation of 2-isopropylmaleate. The polypeptide is 3-isopropylmalate dehydratase large subunit (Salinispora arenicola (strain CNS-205)).